We begin with the raw amino-acid sequence, 319 residues long: Putative binding protein BAB2_1146 (319 aa).

The N-terminal stretch at 1–22 (MKRRTFLAMSLALTFLPSVALA) is a signal peptide.

Belongs to the bacterial solute-binding protein SsuA/TauA family. As to quaternary structure, the complex is composed of two ATP-binding proteins (BAB2_1147), two transmembrane proteins (BAB2_1148) and a solute-binding protein (BAB2_1146).

The protein resides in the periplasm. Its function is as follows. Probably part of an ABC transporter complex. This is Putative binding protein BAB2_1146 from Brucella abortus (strain 2308).